The following is a 311-amino-acid chain: tRNA-cytidine(32) 2-sulfurtransferase (311 aa).

A PP-loop motif motif is present at residues 47–52 (SGGKDS). Cysteine 122, cysteine 125, and cysteine 213 together coordinate [4Fe-4S] cluster.

This sequence belongs to the TtcA family. As to quaternary structure, homodimer. The cofactor is Mg(2+). It depends on [4Fe-4S] cluster as a cofactor.

It localises to the cytoplasm. It carries out the reaction cytidine(32) in tRNA + S-sulfanyl-L-cysteinyl-[cysteine desulfurase] + AH2 + ATP = 2-thiocytidine(32) in tRNA + L-cysteinyl-[cysteine desulfurase] + A + AMP + diphosphate + H(+). Its pathway is tRNA modification. In terms of biological role, catalyzes the ATP-dependent 2-thiolation of cytidine in position 32 of tRNA, to form 2-thiocytidine (s(2)C32). The sulfur atoms are provided by the cysteine/cysteine desulfurase (IscS) system. The protein is tRNA-cytidine(32) 2-sulfurtransferase of Salmonella dublin (strain CT_02021853).